Reading from the N-terminus, the 287-residue chain is ATP phosphoribosyltransferase (287 aa).

It belongs to the ATP phosphoribosyltransferase family. Long subfamily. It depends on Mg(2+) as a cofactor.

It is found in the cytoplasm. The enzyme catalyses 1-(5-phospho-beta-D-ribosyl)-ATP + diphosphate = 5-phospho-alpha-D-ribose 1-diphosphate + ATP. It participates in amino-acid biosynthesis; L-histidine biosynthesis; L-histidine from 5-phospho-alpha-D-ribose 1-diphosphate: step 1/9. Feedback inhibited by histidine. Functionally, catalyzes the condensation of ATP and 5-phosphoribose 1-diphosphate to form N'-(5'-phosphoribosyl)-ATP (PR-ATP). Has a crucial role in the pathway because the rate of histidine biosynthesis seems to be controlled primarily by regulation of HisG enzymatic activity. This is ATP phosphoribosyltransferase (hisG) from Methanothermobacter thermautotrophicus (strain ATCC 29096 / DSM 1053 / JCM 10044 / NBRC 100330 / Delta H) (Methanobacterium thermoautotrophicum).